A 201-amino-acid chain; its full sequence is FMN-dependent NADH:quinone oxidoreductase (201 aa).

Residues Ser-10, 16-18, 95-98, and 139-142 each bind FMN; these read SQS, MYNF, and TTGG.

Belongs to the azoreductase type 1 family. Homodimer. FMN serves as cofactor.

It catalyses the reaction 2 a quinone + NADH + H(+) = 2 a 1,4-benzosemiquinone + NAD(+). It carries out the reaction N,N-dimethyl-1,4-phenylenediamine + anthranilate + 2 NAD(+) = 2-(4-dimethylaminophenyl)diazenylbenzoate + 2 NADH + 2 H(+). In terms of biological role, quinone reductase that provides resistance to thiol-specific stress caused by electrophilic quinones. Its function is as follows. Also exhibits azoreductase activity. Catalyzes the reductive cleavage of the azo bond in aromatic azo compounds to the corresponding amines. This chain is FMN-dependent NADH:quinone oxidoreductase, found in Tolumonas auensis (strain DSM 9187 / NBRC 110442 / TA 4).